Here is a 108-residue protein sequence, read N- to C-terminus: Abscisic stress-ripening protein 3 (108 aa).

Disordered regions lie at residues 1 to 34 and 84 to 108; these read MAEE…HHSH and FAFH…GRHH. A compositionally biased stretch (basic and acidic residues) spans 15–24; sequence NREEEGGPVD. Over residues 25-34 the composition is skewed to basic residues; the sequence is HKKKVKHHSH. The span at 95–108 shows a compositional bias: basic and acidic residues; it reads AKKEKKAAEKGRHH.

The protein belongs to the abscisic acid and water stress-induced protein family.

This is Abscisic stress-ripening protein 3 from Solanum lycopersicum (Tomato).